The sequence spans 364 residues: MREYKIAAIPADGIGPEVIAAGLQVLEALEQRSGDFKIHTETFDWGSDYYKKHGVMMPADGLDKLKKFDAIFFGAVGAPDVPDHITLWGLRLPICQGFDQYANVRPTKILPGITPPLRNCGPGDLDWVIVRENSEGEYSGHGGRAHRGLPEEVGTEVAIFTRVGVTRIMRYAFKLAQARPRKLLTVVTKSNAQRHGMVMWDEIAAEVATEFPDVTWDKMLVDAMTVRMTLKPETLDTIVATNLHADILSDLAGALAGSLGVAPTANIDPERRFPSMFEPIHGSAFDITGKGIANPIATFWTAAQMLEHLGERDAAARLMSAVERVTEAGILTPDVGGTANTRQVTEAVCNAIAGSNILKMAAAE.

3 residues coordinate Mn(2+): Asp-222, Asp-246, and Asp-250.

It belongs to the isocitrate and isopropylmalate dehydrogenases family. It depends on Mg(2+) as a cofactor. Mn(2+) serves as cofactor. K(+) is required as a cofactor.

It localises to the cytoplasm. It carries out the reaction tartrate + NAD(+) = 2-hydroxy-3-oxosuccinate + NADH + H(+). The enzyme catalyses (2R,3S)-tartrate + NAD(+) = 2-hydroxy-3-oxosuccinate + NADH + H(+). It catalyses the reaction (2R,3R)-tartrate + NAD(+) = 2-hydroxy-3-oxosuccinate + NADH + H(+). The catalysed reaction is (2R,3R)-tartrate + H(+) = (R)-glycerate + CO2. It carries out the reaction (R)-malate + NAD(+) = pyruvate + CO2 + NADH. Its pathway is carbohydrate acid metabolism; tartrate degradation; 2-hydroxy-3-oxosuccinate from L-tartrate: step 1/1. It participates in carbohydrate acid metabolism; tartrate degradation; 2-hydroxy-3-oxosuccinate from meso-tartrate: step 1/1. The protein operates within carbohydrate acid metabolism; tartrate degradation; D-glycerate from L-tartrate: step 1/1. In terms of biological role, has multiple catalytic activities. Apart from catalyzing the oxidation of (+)-tartrate to oxaloglycolate, also converts meso-tartrate to D-glycerate and catalyzes the oxidative decarboxylation of D-malate to pyruvate. This Agrobacterium vitis (Rhizobium vitis) protein is Probable tartrate dehydrogenase/decarboxylase TtuC (ttuC).